The primary structure comprises 835 residues: Translation initiation factor IF-2 (835 aa).

Positions 1–243 (MSDTDGKKTL…RARQKAMGGA (243 aa)) are disordered. Over residues 43 to 67 (VPKPGAGKPSAGGSSPAGDPSRRPA) the composition is skewed to low complexity. Composition is skewed to basic and acidic residues over residues 85-147 (KARE…EAKR), 157-166 (EAPKAERSAE), and 175-205 (EGGDNARRTTDRDREREQRQTRGKGRQDGRR). Positions 332–500 (PRPPVITIMG…AIALQAEILE (169 aa)) constitute a tr-type G domain. The segment at 341–348 (GHVDHGKT) is G1. A GTP-binding site is contributed by 341–348 (GHVDHGKT). The segment at 366–370 (GITQH) is G2. Positions 388-391 (DTPG) are G3. Residues 388-392 (DTPGH) and 442-445 (NKID) contribute to the GTP site. The interval 442 to 445 (NKID) is G4. A G5 region spans residues 478–480 (SAK).

The protein belongs to the TRAFAC class translation factor GTPase superfamily. Classic translation factor GTPase family. IF-2 subfamily.

Its subcellular location is the cytoplasm. In terms of biological role, one of the essential components for the initiation of protein synthesis. Protects formylmethionyl-tRNA from spontaneous hydrolysis and promotes its binding to the 30S ribosomal subunits. Also involved in the hydrolysis of GTP during the formation of the 70S ribosomal complex. This chain is Translation initiation factor IF-2, found in Ruegeria pomeroyi (strain ATCC 700808 / DSM 15171 / DSS-3) (Silicibacter pomeroyi).